A 557-amino-acid chain; its full sequence is MEEDGGGGAGWGWATWRVAAVAAAAAVWVTMHVAARMADALWWRPRRLEAHFAAQGVRGPPYRFLLGSVREMVALMAEASSKPMSPPTSHNALPRVLAFYHYWRKIYGHRFLIWFGPTPRLTVAEPELIREIFLTRADAFDRYEAHPVVRQLEGDGLVSLHGDKWALHRRVLTDAFYPDNLNRLIPHVGKSVAALAAKWGAMAEAGGSGEVEVDVAEWFQAVTEEAITRATFGRSYDDGRVVFAMQGQLMAFASEAFRKVLVPGYRFLPTKKNRLSWRLDREIRRSLMRLIGRRSDEAEQGEKADDGSFRDLLGLMINAGAAAATRGNAGGEKNSPAAAIPVEDMLEECKTFFFAGKQTTTNLLTWATVLLAMHPDWQERARREVFDVCGAGELPSKEHLPKLKTLGMIMNETLRLYPPAVATIRRAKVDVQLSDGCMIPRDMELLVPIMAIHHDTRYWGPDASQFNPARFANGASKAAKHPLAFIPFGLGSRMCVGQNLARLEAKLTMAILLQRFEIRTSPNYVHAPTVLMLLYPQYGAPLIFRPLSSHPPDSTGP.

Residues 13–35 traverse the membrane as a helical segment; the sequence is WATWRVAAVAAAAAVWVTMHVAA. C495 lines the heme pocket.

Belongs to the cytochrome P450 family. It depends on heme as a cofactor. In terms of tissue distribution, expressed in roots, shoot apex, leaf sheaths and leaf blades.

The protein localises to the membrane. Cytochrome P450 involved in brassinosteroids (BRs) inactivation and regulation of BRs homeostasis. Is a multifunctional and multisubstrate enzyme that controls the endogenous bioactive BR content both by direct inactivation of castasterone (CS) and by decreasing the levels of BR precursors. Catalyzes the oxidation of carbon 22 hydroxylated BR intermediates to produce C26 oxidized metabolites. The polypeptide is Cytochrome P450 734A2 (CYP734A2) (Oryza sativa subsp. japonica (Rice)).